The following is a 345-amino-acid chain: S-adenosylmethionine:tRNA ribosyltransferase-isomerase (345 aa).

It belongs to the QueA family. In terms of assembly, monomer.

Its subcellular location is the cytoplasm. It carries out the reaction 7-aminomethyl-7-carbaguanosine(34) in tRNA + S-adenosyl-L-methionine = epoxyqueuosine(34) in tRNA + adenine + L-methionine + 2 H(+). It participates in tRNA modification; tRNA-queuosine biosynthesis. In terms of biological role, transfers and isomerizes the ribose moiety from AdoMet to the 7-aminomethyl group of 7-deazaguanine (preQ1-tRNA) to give epoxyqueuosine (oQ-tRNA). The polypeptide is S-adenosylmethionine:tRNA ribosyltransferase-isomerase (Shewanella pealeana (strain ATCC 700345 / ANG-SQ1)).